The following is a 239-amino-acid chain: Zinc finger protein 575 (239 aa).

The disordered stretch occupies residues 1-62 (MLGGSVKSEV…PQRPHRCPDC (62 aa)). The span at 22–31 (PETKAPHQDL) shows a compositional bias: basic and acidic residues. Residues 46 to 57 (RPRRRPPPQRPH) are compositionally biased toward basic residues. 6 consecutive C2H2-type zinc fingers follow at residues 57 to 79 (HRCP…RLAH), 85 to 107 (HPCP…RLTH), 113 to 135 (HSCP…LWTH), 141 to 163 (YPCP…RHTH), 171 to 193 (YPCP…RLCH), and 207 to 230 (HRCS…RSHH).

Belongs to the krueppel C2H2-type zinc-finger protein family.

It localises to the nucleus. In terms of biological role, may be involved in transcriptional regulation. This is Zinc finger protein 575 (Znf575) from Mus musculus (Mouse).